The sequence spans 421 residues: Membrane-associated protein UidC (421 aa).

The signal sequence occupies residues 1-23 (MRKIVAMAVICLTAASGLTSAYA).

This sequence belongs to the outer membrane porin (Opr) (TC 1.B.25) family.

The protein resides in the cell outer membrane. In terms of biological role, enhances the activity of the UidB (GusB) glucuronide transporter, on its own however it has no transport activity. Glucuronide transport does not occur in strain K12 due to a variant at position 100 of the UidB (GusB, AC P0CE44, AC P0CE45) protein. The protein is Membrane-associated protein UidC (uidC) of Escherichia coli (strain K12).